A 118-amino-acid polypeptide reads, in one-letter code: Thioredoxin-like protein CXXS1 (118 aa).

The 109-residue stretch at 2-110 folds into the Thioredoxin domain; it reads ARVVKIDSAE…IKKRVDGFVQ (109 aa).

This sequence belongs to the thioredoxin family. Ubiquitous.

It localises to the cytoplasm. In terms of biological role, possesses low disulfide reductase activity, but efficient protein disulfide isomerase activity. Does not possess deglutathionylation activity. The protein is Thioredoxin-like protein CXXS1 (CXXS1) of Arabidopsis thaliana (Mouse-ear cress).